The primary structure comprises 156 residues: Small ribosomal subunit protein bS16 (156 aa).

Composition is skewed to low complexity over residues 113–123 and 137–156; these read AESGTTAAATT and EAPAEAAEAPAEAADAASES. The tract at residues 113-156 is disordered; it reads AESGTTAAATTPKKKKAPKKDEAAEAPAEAAEAPAEAADAASES.

This sequence belongs to the bacterial ribosomal protein bS16 family.

This is Small ribosomal subunit protein bS16 from Mycolicibacterium smegmatis (strain ATCC 700084 / mc(2)155) (Mycobacterium smegmatis).